A 292-amino-acid chain; its full sequence is Glutamyl-Q tRNA(Asp) synthetase (292 aa).

L-glutamate is bound by residues 11–15 (RFAPS) and Glu-47. Residues 14–24 (PSPTGPLHFGS) carry the 'HIGH' region motif. Cys-103, Cys-105, Tyr-116, and Cys-120 together coordinate Zn(2+). The L-glutamate site is built by Tyr-173 and Arg-191. A 'KMSKS' region motif is present at residues 229-233 (KLSKQ). Lys-232 contributes to the ATP binding site.

This sequence belongs to the class-I aminoacyl-tRNA synthetase family. GluQ subfamily. Zn(2+) is required as a cofactor.

Catalyzes the tRNA-independent activation of glutamate in presence of ATP and the subsequent transfer of glutamate onto a tRNA(Asp). Glutamate is transferred on the 2-amino-5-(4,5-dihydroxy-2-cyclopenten-1-yl) moiety of the queuosine in the wobble position of the QUC anticodon. This Acinetobacter baylyi (strain ATCC 33305 / BD413 / ADP1) protein is Glutamyl-Q tRNA(Asp) synthetase.